Consider the following 218-residue polypeptide: N-(5'-phosphoribosyl)anthranilate isomerase (218 aa).

Belongs to the TrpF family.

It catalyses the reaction N-(5-phospho-beta-D-ribosyl)anthranilate = 1-(2-carboxyphenylamino)-1-deoxy-D-ribulose 5-phosphate. The protein operates within amino-acid biosynthesis; L-tryptophan biosynthesis; L-tryptophan from chorismate: step 3/5. This Bacillus licheniformis (strain ATCC 14580 / DSM 13 / JCM 2505 / CCUG 7422 / NBRC 12200 / NCIMB 9375 / NCTC 10341 / NRRL NRS-1264 / Gibson 46) protein is N-(5'-phosphoribosyl)anthranilate isomerase.